The following is a 435-amino-acid chain: GTPase Der (435 aa).

EngA-type G domains follow at residues 4–167 (PVVA…PAEK) and 175–350 (ISFS…DNQN). GTP contacts are provided by residues 10-17 (GQPNVGKS), 57-61 (DTGGI), 119-122 (NKAD), 181-188 (GRPNVGKS), 228-232 (DTAGI), and 293-296 (NKWD). One can recognise a KH-like domain in the interval 351-435 (QRIQSSVLND…PIKILPRKRK (85 aa)).

The protein belongs to the TRAFAC class TrmE-Era-EngA-EngB-Septin-like GTPase superfamily. EngA (Der) GTPase family. In terms of assembly, associates with the 50S ribosomal subunit.

In terms of biological role, GTPase that plays an essential role in the late steps of ribosome biogenesis. The chain is GTPase Der from Lactobacillus acidophilus (strain ATCC 700396 / NCK56 / N2 / NCFM).